Consider the following 473-residue polypeptide: MDNNNNNNTFSSLDNVMTNQNPLLMDFIPSREDSTSFSTMLPWNTIRSDPLQMGGFDIFNSMLTNKYLSSSPRSIDVQDNRNVEFMAPPPHPPPLHPLDHLRHYDDSSNNMWGFEANSEFQAFSGVVGPSEPMMSTFGEEDFPFLISNKRNNELSLSLASDVSDECSEISLCAATRLASEQASCSSKDISNNVVTQGFSQLIFGSKYLHSVQEILSHFAAYSLDYSSRGTESGAASSAFTSRFENITEFLDGDSNNSEAGFGSTFQRRALEAKKTHLLDLLQMVDDRYSHCVDEIHTVISAFHAATELDPQLHTRFALQTVSFLYKNLRERICKKIISMGSVLERGKDKTQETSMFHQHCLLQQLKRKNHQIWRPQRGLPEKSVSVLRNWMFQNFLHPYPKDSEKHLLAIRSGLTRSQVSNWFINARVRLWKPMIEEMYAEMNKRKLNNSHIQPNGPTLRMPKSVMMSQAMHK.

The interval serine 205–tyrosine 221 is SR/KY domain. The tract at residues glutamine 266–isoleucine 336 is BELL domain. Positions isoleucine 372 to methionine 434 form a DNA-binding region, homeobox. The disordered stretch occupies residues asparagine 448–lysine 473.

This sequence belongs to the TALE/BELL homeobox family. May form heterodimeric complex with the TALE/KNOX protein STM. Most abundant in flowers.

It is found in the nucleus. Transcription factor which may be involved in the signal transduction pathway downstream of the COP1 gene. Controls floral competency as a specific activator of FLC expression. Is responsive of the nuclear import of SHOOT MERISTEMLESS (STM). This is Homeobox protein ATH1 (ATH1) from Arabidopsis thaliana (Mouse-ear cress).